The following is an 85-amino-acid chain: MKLLLLLTISASMLIEGLVNADGYIRGGDGCKVSCVINHVFCDNECKAAGGSYGYCWGWGLACWCEGLPAEREWDYETNTCGGKK.

The signal sequence occupies residues 1 to 21; that stretch reads MKLLLLLTISASMLIEGLVNA. Residues 22 to 82 enclose the LCN-type CS-alpha/beta domain; the sequence is DGYIRGGDGC…EWDYETNTCG (61 aa). 4 disulfides stabilise this stretch: Cys-31–Cys-81, Cys-35–Cys-56, Cys-42–Cys-63, and Cys-46–Cys-65. Position 82 is a glycine amide (Gly-82).

It belongs to the long (4 C-C) scorpion toxin superfamily. Sodium channel inhibitor family. Beta subfamily. In terms of tissue distribution, expressed by the venom gland.

It is found in the secreted. Its function is as follows. Depressant insect beta-toxins cause a transient contraction paralysis followed by a slow flaccid paralysis. They bind voltage-independently at site-4 of sodium channels (Nav) and block action potentials, primarily by depolarizing the axonal membrane and suppressing the sodium current. This depressant toxin is active only on insects. It is found in a relatively small amount in the venom, and its activity on insects is 10-fold higher compared to other known depressant toxins. This Leiurus hebraeus (Hebrew deathstalker scorpion) protein is Beta-insect depressant toxin Lqh-dprIT3d.